Reading from the N-terminus, the 824-residue chain is Intraflagellar transport protein 88 homolog (824 aa).

Positions 113–134 (FDPLSQSRGPASPLEAKKKDSP) are disordered. TPR repeat units lie at residues 197–230 (YSVL…KMFS), 233–266 (GILK…VPSV), 272–305 (IKIM…APNL), 307–338 (AGYN…PLEI), 415–448 (NDLE…DSRV), 450–483 (SAAA…DRYN), 484–517 (PAAL…DSSC), 518–551 (TEAL…LRNS), 552–585 (AEVL…IPTD), 586–619 (PQVL…FPCN), 620–653 (IEVI…QPTQ), and 654–687 (VKWQ…FPEN). A disordered region spans residues 724 to 824 (EQRIKSGRDG…EELGDDLLPE (101 aa)). Positions 748–757 (DSGQNYSASS) are enriched in polar residues. The segment covering 797–808 (ERPKTAAKKRID) has biased composition (basic and acidic residues). Positions 809 to 824 (EDDFADEELGDDLLPE) are enriched in acidic residues.

In terms of assembly, component of the IFT complex B, at least composed of IFT20, IFT22, IFT25, IFT27, IFT46, IFT52, TRAF3IP1/IFT54, IFT57, IFT74, IFT80, IFT81, and IFT88. Interacts with IFT20, IFT22, IFT25, IFT27, IFT52, TRAF3IP1, IFT74, IFT80 and IFT81. Interacts with IFT172. Interacts with IFT57. Interacts with IFT46. Interacts with IFT70B. Interacts with C2CD3. Interacts with ENTR1 (via N-terminus). Interacts with LRRC56. Interacts with DZIP1. Interacts with CCDC38. Interacts with CCDC146. Interacts with CFAP53. Expressed in the heart, brain, liver, lung, kidney, skeletal muscle and pancreas.

It is found in the cytoplasm. Its subcellular location is the cytoskeleton. The protein localises to the microtubule organizing center. It localises to the centrosome. The protein resides in the centriole. It is found in the cell projection. Its subcellular location is the cilium. The protein localises to the cilium basal body. It localises to the flagellum. Positively regulates primary cilium biogenesis. Also involved in autophagy since it is required for trafficking of ATG16L and the expansion of the autophagic compartment. This chain is Intraflagellar transport protein 88 homolog (IFT88), found in Homo sapiens (Human).